The chain runs to 467 residues: Nuclear distribution protein nudF 1 (467 aa).

The region spanning 9–41 (QAEELHKSIIAYLASVNLSESATTLRAELGDAV) is the LisH domain. Residues 60–87 (TSVVRLQKKIMDLESRCAALQSELDSAT) are a coiled coil. 8 WD repeats span residues 113–154 (SHRS…RTVK), 156–196 (HTKA…KNIR), 200–247 (GHDH…CVKT), 250–289 (GHVD…TRST), 292–352 (GHEH…IKTL), 354–393 (GHDN…KCVR), 398–428 (THEH…NGTP), and 429–466 (AATT…RVFA). The span at 417 to 437 (GANGDAGANGTPAATTTSNGA) shows a compositional bias: low complexity. A disordered region spans residues 417 to 441 (GANGDAGANGTPAATTTSNGARQDP).

Belongs to the WD repeat LIS1/nudF family. In terms of assembly, self-associates. Interacts with nudE and dynein.

It is found in the cytoplasm. The protein localises to the cytoskeleton. Its subcellular location is the spindle pole. In terms of biological role, positively regulates the activity of the minus-end directed microtubule motor protein dynein. May enhance dynein-mediated microtubule sliding by targeting dynein to the microtubule plus end. Required for nuclear migration during vegetative growth as well as development. Required for retrograde early endosome (EE) transport from the hyphal tip. Required for localization of dynein to the mitotic spindle poles. Recruits additional proteins to the dynein complex at SPBs. The sequence is that of Nuclear distribution protein nudF 1 from Aspergillus clavatus (strain ATCC 1007 / CBS 513.65 / DSM 816 / NCTC 3887 / NRRL 1 / QM 1276 / 107).